The primary structure comprises 84 residues: Small ribosomal subunit protein bS16c (84 aa).

This sequence belongs to the bacterial ribosomal protein bS16 family.

The protein localises to the plastid. It is found in the chloroplast. The sequence is that of Small ribosomal subunit protein bS16c from Mesostigma viride (Green alga).